Here is a 369-residue protein sequence, read N- to C-terminus: Endo-1,4-beta-xylanase A (369 aa).

The first 20 residues, 1–20 (MRKLTQFCLGLMLLPIAAVA), serve as a signal peptide directing secretion. The GH10 domain occupies 21-367 (QNQPTMKDVL…KPVVKEIIKL (347 aa)). E156 functions as the Proton donor in the catalytic mechanism. E261 serves as the catalytic Nucleophile.

The protein belongs to the glycosyl hydrolase 10 (cellulase F) family.

It carries out the reaction Endohydrolysis of (1-&gt;4)-beta-D-xylosidic linkages in xylans.. It functions in the pathway glycan degradation; xylan degradation. The protein is Endo-1,4-beta-xylanase A (xynA) of Xylanibacter ruminicola (Prevotella ruminicola).